Consider the following 161-residue polypeptide: Probable chemoreceptor glutamine deamidase CheD (161 aa).

Belongs to the CheD family.

The catalysed reaction is L-glutaminyl-[protein] + H2O = L-glutamyl-[protein] + NH4(+). Its function is as follows. Probably deamidates glutamine residues to glutamate on methyl-accepting chemotaxis receptors (MCPs), playing an important role in chemotaxis. The protein is Probable chemoreceptor glutamine deamidase CheD of Thermococcus kodakarensis (strain ATCC BAA-918 / JCM 12380 / KOD1) (Pyrococcus kodakaraensis (strain KOD1)).